A 140-amino-acid chain; its full sequence is MATRGLLLASWALLGALVLQAEARPAPYGVKLCGREFIRAVIFTCGGSRWRRADILAHDPLGEFFADGEANTDHLASELDEAVGSSEWLALTKSPQVFYGGRSSWQGSPGVVRGSRDVLAGLSSSCCEWGCSKSQISSLC.

Residues 1–23 (MATRGLLLASWALLGALVLQAEA) form the signal peptide. 3 cysteine pairs are disulfide-bonded: Cys-33/Cys-127, Cys-45/Cys-140, and Cys-126/Cys-131. The propeptide at 53 to 116 (ADILAHDPLG…GSPGVVRGSR (64 aa)) is connecting peptide.

The protein belongs to the insulin family. As to quaternary structure, heterodimer of a B chain and an A chain linked by two disulfide bonds. In terms of tissue distribution, highly abundant expression is detected in neurons within the ventomedial dorsal tegmental nucleus and the laterally central gray alpha of the pons. Also detected at much lower levels within the hippocampus.

The protein localises to the secreted. In terms of biological role, may play a role in neuropeptide signaling processes. Ligand for LGR7, relaxin-3 receptor-1 and relaxin-3 receptor-2. The sequence is that of Relaxin-3 (Rln3) from Rattus norvegicus (Rat).